Consider the following 150-residue polypeptide: Arginine repressor (150 aa).

The protein belongs to the ArgR family.

Its subcellular location is the cytoplasm. It participates in amino-acid biosynthesis; L-arginine biosynthesis [regulation]. Functionally, regulates arginine biosynthesis genes. This is Arginine repressor from Desulforudis audaxviator (strain MP104C).